Here is a 295-residue protein sequence, read N- to C-terminus: 33 kDa chaperonin (295 aa).

2 cysteine pairs are disulfide-bonded: Cys-237–Cys-239 and Cys-270–Cys-273.

It belongs to the HSP33 family. In terms of processing, under oxidizing conditions two disulfide bonds are formed involving the reactive cysteines. Under reducing conditions zinc is bound to the reactive cysteines and the protein is inactive.

The protein resides in the cytoplasm. Functionally, redox regulated molecular chaperone. Protects both thermally unfolding and oxidatively damaged proteins from irreversible aggregation. Plays an important role in the bacterial defense system toward oxidative stress. This is 33 kDa chaperonin from Lactiplantibacillus plantarum (strain ATCC BAA-793 / NCIMB 8826 / WCFS1) (Lactobacillus plantarum).